The sequence spans 472 residues: tRNA-2-methylthio-N(6)-dimethylallyladenosine synthase (472 aa).

The tract at residues Met1–Gly24 is disordered. An MTTase N-terminal domain is found at Gly33 to Glu150. Cys42, Cys79, Cys113, Cys187, Cys191, and Cys194 together coordinate [4Fe-4S] cluster. A Radical SAM core domain is found at Arg173 to Ser407. The 64-residue stretch at Glu408–Ala471 folds into the TRAM domain.

Belongs to the methylthiotransferase family. MiaB subfamily. In terms of assembly, monomer. Requires [4Fe-4S] cluster as cofactor.

The protein resides in the cytoplasm. It carries out the reaction N(6)-dimethylallyladenosine(37) in tRNA + (sulfur carrier)-SH + AH2 + 2 S-adenosyl-L-methionine = 2-methylsulfanyl-N(6)-dimethylallyladenosine(37) in tRNA + (sulfur carrier)-H + 5'-deoxyadenosine + L-methionine + A + S-adenosyl-L-homocysteine + 2 H(+). Functionally, catalyzes the methylthiolation of N6-(dimethylallyl)adenosine (i(6)A), leading to the formation of 2-methylthio-N6-(dimethylallyl)adenosine (ms(2)i(6)A) at position 37 in tRNAs that read codons beginning with uridine. The chain is tRNA-2-methylthio-N(6)-dimethylallyladenosine synthase from Stenotrophomonas maltophilia (strain R551-3).